Here is a 423-residue protein sequence, read N- to C-terminus: Progestin and adipoQ receptor-like protein 1 (423 aa).

At 1 to 201 the chain is on the cytoplasmic side; that stretch reads MDPDEVNQAL…KSIWSLHTET (201 aa). Residues 54 to 140 form a disordered region; it reads VVSPTNSDDE…DEDELEVDVK (87 aa). Acidic residues predominate over residues 60 to 69; the sequence is SDDEEGEFCS. Residues 104–114 show a composition bias toward basic residues; sequence TVLRYRRKKGG. The chain crosses the membrane as a helical span at residues 202-222; that stretch reads GNIWTHLIGCVAFFLLACWFL. Residues 223 to 234 are Extracellular-facing; it reads TRPDNHIQFQEK. A helical membrane pass occupies residues 235–252; the sequence is VVFSFFFAGAVSVSDSRS. Residues 253–288 lie on the Cytoplasmic side of the membrane; sequence PSTPSRVIRSTSSRYSANSTIWESRCSLSARLFQPK. The helical transmembrane segment at 289–309 threads the bilayer; that stretch reads ITYIAMVCVLGIGAIVVSLWD. The Extracellular segment spans residues 310–320; sequence KFSESKYRPVR. A helical transmembrane segment spans residues 321 to 341; that stretch reads AAVFVGMGCSGVIPTIHYIIT. Residues 342-351 are Cytoplasmic-facing; sequence DGVHSLFADN. The chain crosses the membrane as a helical span at residues 352–372; sequence SFHWLLLMAFLYLLGAALYAT. At 373–392 the chain is on the extracellular side; it reads RTPERFFPGKCDIWFQSHQL. Residues 393–413 form a helical membrane-spanning segment; it reads FHTCVVIAAFVHYYGISEMAF. Over 414-423 the chain is Cytoplasmic; that stretch reads ARLNEQCPVR.

It belongs to the ADIPOR family.

The protein resides in the membrane. Probable receptor, which may be involved in metabolic pathways that regulate lipid metabolism such as fatty acid oxidation. This is Progestin and adipoQ receptor-like protein 1 from Caenorhabditis briggsae.